Here is an 834-residue protein sequence, read N- to C-terminus: 5-hydroxytryptamine receptor 2A (834 aa).

Residues 1–230 (MAHETSFNDA…TQLLRMAVTS (230 aa)) lie on the Extracellular side of the membrane. Positions 56-75 (TDDGQLEDTNNNNNSKRYYS) are disordered. N-linked (GlcNAc...) asparagine glycosylation is found at Asn-68, Asn-97, Asn-161, Asn-175, Asn-183, Asn-194, Asn-203, and Asn-209. A helical membrane pass occupies residues 231–253 (VLLGLMILVTIIGNVFVIAAIIL). The Cytoplasmic portion of the chain corresponds to 254–263 (ERNLQNVANY). A helical membrane pass occupies residues 264 to 285 (LVASLAVADLFVACLVMPLGAV). The Extracellular segment spans residues 286 to 300 (YEISQGWILGPELCD). A disulfide bridge connects residues Cys-299 and Cys-378. Residues 301 to 322 (IWTSCDVLCCTASILHLVAIAV) traverse the membrane as a helical segment. Residues 323–341 (DRYWAVTNIDYIHSRTSNR) are Cytoplasmic-facing. Residues 342 to 364 (VFMMIFCVWTAAVIVSLAPQFGW) form a helical membrane-spanning segment. Over 365–391 (KDPDYLQRIEQQKCMVSQDVSYQVFAT) the chain is Extracellular. Residues 392 to 413 (CCTFYVPLLVILALYWKIYQTA) traverse the membrane as a helical segment. At 414–752 (RKRIHRRRPR…AKRERKAAKT (339 aa)) the chain is on the cytoplasmic side. Disordered regions lie at residues 420–442 (RRPR…ATDT), 460–516 (KTGS…STSG), 531–599 (QQGK…SEDQ), 617–640 (LEQV…TSNA), and 674–743 (STLT…TLEA). 2 stretches are compositionally biased toward polar residues: residues 482-502 (GNST…SNVD) and 532-542 (QGKSTAKSSAA). Positions 551–564 (RQEDDGQRPEHGEQ) are enriched in basic and acidic residues. Positions 565–575 (EDREELEDQDE) are enriched in acidic residues. A compositionally biased stretch (low complexity) spans 582-593 (TTATSATTAAGT). A compositionally biased stretch (polar residues) spans 674–694 (STLTSCNQSHPLCGTANESPS). Over residues 702-723 (QPTTPQQQPHQQAHQQQQQQQQ) the composition is skewed to low complexity. Residues 753–776 (LAIITGAFVVCWLPFFVMALTMPL) form a helical membrane-spanning segment. At 777 to 785 (CAACQISDS) the chain is on the extracellular side. Residues 786-808 (VASLFLWLGYFNSTLNPVIYTIF) form a helical membrane-spanning segment. Residues 809–834 (SPEFRQAFKRILFGGHRPVHYRSGKL) are Cytoplasmic-facing.

It belongs to the G-protein coupled receptor 1 family.

The protein localises to the cell membrane. This is one of the several different receptors for 5-hydroxytryptamine (serotonin), a biogenic hormone that functions as a neurotransmitter, a hormone, and a mitogen. The activity of this receptor is mediated by G proteins which inhibit adenylate cyclase. The sequence is that of 5-hydroxytryptamine receptor 2A (5-HT1A) from Drosophila melanogaster (Fruit fly).